The chain runs to 311 residues: Putative F-box protein At1g31090 (311 aa).

Residues 4–53 (GANSDSIPTDLIYEILSRLSVKPITRFRCVSKLWESIICRQDFTELFHNR) enclose the F-box domain. The segment at 287-311 (RPAEQNTSTSSREDHLVRTVKRKRA) is disordered.

In Arabidopsis thaliana (Mouse-ear cress), this protein is Putative F-box protein At1g31090.